Consider the following 260-residue polypeptide: Ribosomal RNA small subunit methyltransferase A (260 aa).

Positions 23, 48, 69, 94, and 110 each coordinate S-adenosyl-L-methionine.

Belongs to the class I-like SAM-binding methyltransferase superfamily. rRNA adenine N(6)-methyltransferase family. RsmA subfamily.

The protein resides in the cytoplasm. The catalysed reaction is adenosine(1518)/adenosine(1519) in 16S rRNA + 4 S-adenosyl-L-methionine = N(6)-dimethyladenosine(1518)/N(6)-dimethyladenosine(1519) in 16S rRNA + 4 S-adenosyl-L-homocysteine + 4 H(+). Its function is as follows. Specifically dimethylates two adjacent adenosines (A1518 and A1519) in the loop of a conserved hairpin near the 3'-end of 16S rRNA in the 30S particle. May play a critical role in biogenesis of 30S subunits. The protein is Ribosomal RNA small subunit methyltransferase A of Thermotoga neapolitana (strain ATCC 49049 / DSM 4359 / NBRC 107923 / NS-E).